The chain runs to 304 residues: Recombination-associated protein RdgC (304 aa).

This sequence belongs to the RdgC family.

The protein resides in the cytoplasm. Its subcellular location is the nucleoid. Its function is as follows. May be involved in recombination. The chain is Recombination-associated protein RdgC from Dechloromonas aromatica (strain RCB).